Consider the following 404-residue polypeptide: Tryptophan synthase beta chain (404 aa).

Lys-91 is modified (N6-(pyridoxal phosphate)lysine).

It belongs to the TrpB family. As to quaternary structure, tetramer of two alpha and two beta chains. The cofactor is pyridoxal 5'-phosphate.

It carries out the reaction (1S,2R)-1-C-(indol-3-yl)glycerol 3-phosphate + L-serine = D-glyceraldehyde 3-phosphate + L-tryptophan + H2O. The protein operates within amino-acid biosynthesis; L-tryptophan biosynthesis; L-tryptophan from chorismate: step 5/5. The beta subunit is responsible for the synthesis of L-tryptophan from indole and L-serine. This Clavibacter michiganensis subsp. michiganensis (strain NCPPB 382) protein is Tryptophan synthase beta chain.